Here is a 1771-residue protein sequence, read N- to C-terminus: Kinase D-interacting substrate of 220 kDa (1771 aa).

The Cytoplasmic portion of the chain corresponds to 1–499; that stretch reads MSVLISQSVI…QIEPLFQFSW (499 aa). 12 ANK repeats span residues 4–33, 37–66, 70–99, 103–132, 136–165, 169–198, 202–231, 235–264, 268–297, 301–330, 334–363, and 367–396; these read LISQSVINYVEEENIPALKALLEKCKDVDE, CGQTPLMIAAEQGNLEIVKELIKNGANCNL, DNWTALISASKEGHVHIVEELLKCGVNLEH, GGWTALMWACYKGRTDVVELLLSHGANPSV, YSVYPIIWAAGRGHADIVHLLLQNGAKVNC, YGTTPLVWAARKGHLECVKHLLAMGADVDQ, NSMTALIVAVKGGYTQSVKEILKRNPNVNL, DGNTALMIASKEGHTEIVQDLLDAGTYVNI, SGDTVLIGAVRGGHVEIVRALLQKYADIDI, DNKTALYWAVEKGNATMVRDILQCNPDTEI, DGETPLIKATKMRNIEVVELLLDKGAKVSA, and KGDTPLHIAIRGRSRKLAELLLRNPKDGRL. A KAP NTPase domain is found at 440–953; it reads YDLYSSALAD…NIVSVTGRLL (514 aa). Residues 500–520 form a helical membrane-spanning segment; the sequence is LIVFLTLLLCGGLGLLFAFTV. The Extracellular portion of the chain corresponds to 521-524; it reads HPNL. A helical membrane pass occupies residues 525 to 545; sequence GIAVSLSFLALLYIFFIVIYF. Residues 546–659 lie on the Cytoplasmic side of the membrane; it reads GGRREGESWN…KWKKTCCLPS (114 aa). Residues 660-680 form a helical membrane-spanning segment; the sequence is FVIFLFIIGCIISGITLLAIF. Residues 681–685 lie on the Extracellular side of the membrane; it reads RVDPK. Residues 686 to 706 traverse the membrane as a helical segment; it reads HLTVNAVLISIASVVGLAFVL. At 707–1771 the chain is on the cytoplasmic side; sequence NCRTWWQVLD…GFGEERESIL (1065 aa). A phosphoserine mark is found at Ser-882 and Ser-885. Phosphothreonine is present on Thr-914. At Ser-918 the chain carries Phosphoserine. The interval 1089 to 1092 is mediates interaction with CRKL; that stretch reads PRAP. Ser-1163 carries the phosphoserine modification. 4 disordered regions span residues 1182–1202, 1285–1310, 1344–1368, and 1397–1564; these read DAAEGLSSPTDSSRGSGPAPG, PEDPRFLSESSSGPAPHGEPARRASH, RHSNLSWQSQTRRTPSLSSLNSQDS, and LEGG…EPIR. Phosphoserine is present on residues Ser-1296, Ser-1352, Ser-1359, Ser-1361, Ser-1362, and Ser-1365. Residues 1346-1358 show a composition bias toward polar residues; the sequence is SNLSWQSQTRRTP. The segment covering 1359–1368 has biased composition (low complexity); it reads SLSSLNSQDS. Residues 1403-1430 show a composition bias toward polar residues; that stretch reads STTISGRSSPHSTYYMGQSSSGGSIHSN. Basic and acidic residues predominate over residues 1431-1457; sequence LEQEKGKDSEPKPDDGRKSFLMKRGDV. The segment covering 1460–1470 has biased composition (polar residues); sequence YSSSGVSTNDA. 4 positions are modified to phosphoserine: Ser-1521, Ser-1526, Ser-1555, and Ser-1574. The span at 1522 to 1532 shows a compositional bias: acidic residues; it reads DEDESGTEESD. The span at 1537–1561 shows a compositional bias: basic and acidic residues; sequence LKDDKDRKAEGKVERVPKSPEHSAE. The tract at residues 1578 to 1633 is disordered; the sequence is LDKKDSSDSGVRSSESSPNHSLHNEVADDSQLEKANLIELEDDSHSGKRGIPHSLS. Low complexity predominate over residues 1585-1594; sequence DSGVRSSESS. Ser-1623 and Ser-1633 each carry phosphoserine. A Phosphothreonine modification is found at Thr-1679. Position 1681 is a phosphoserine (Ser-1681). Thr-1684 bears the Phosphothreonine mark. Residues 1713–1731 are compositionally biased toward polar residues; the sequence is LRPSSSPNPTTIQNENLKS. The tract at residues 1713 to 1771 is disordered; that stretch reads LRPSSSPNPTTIQNENLKSMTHKRSQRSSYTRLSKDPPELHAAASSESTGFGEERESIL. A PDZ-binding motif is present at residues 1766-1771; it reads ERESIL.

As to quaternary structure, found in a complex, at least composed of KIDINS220, MAGI2, NTRK1 and RAPGEF2; the complex is mainly formed at late endosomes in a nerve growth factor (NGF)-dependent manner. Interacts with RAPGEF2; the interaction is strengthened after NGF stimulation. Isoform 2 interacts (via C-terminal domain) with MAGI2 isoform 1 (via PDZ domain). Interacts with NTRK1, NTRK2, NTRK3, ERKL and NGFR. Can form a ternary complex with NGFR and NTRK1 and this complex is affected by the expression levels of KIDINS220/ARMS. An increase in KIDINS220/ARMS expression leads to a decreased association of NGFR and NTRK1. Interacts (via PDZ-binding motif) with SNTA1 and SNTB2 (via PDZ domains). Interacts with EPHA4 and PRKD1. Post-translationally, tyrosine phosphorylated by NTRK1, NTRK2, EPHB2 and EPHA4. Phosphorylation at Ser-918 is induced by phorbol ester treatment. Phosphorylation by NTRK2 is induced by brain-derived neurotrophic factor (BDNF) and neurotrophin-4/5. Phosphorylation by NTRK1 is induced by nerve growth factor (NGF). Abundant in developing and adult neural tissues as well as neuroendocrine cells and dendritic cells. Overexpressed in melanoma and melanoma cell lines.

The protein localises to the membrane. Its subcellular location is the late endosome. Promotes a prolonged MAP-kinase signaling by neurotrophins through activation of a Rap1-dependent mechanism. Provides a docking site for the CRKL-C3G complex, resulting in Rap1-dependent sustained ERK activation. May play an important role in regulating postsynaptic signal transduction through the syntrophin-mediated localization of receptor tyrosine kinases such as EPHA4. In cooperation with SNTA1 can enhance EPHA4-induced JAK/STAT activation. Plays a role in nerve growth factor (NGF)-induced recruitment of RAPGEF2 to late endosomes and neurite outgrowth. May play a role in neurotrophin- and ephrin-mediated neuronal outgrowth and in axon guidance during neural development and in neuronal regeneration. Modulates stress-induced apoptosis of melanoma cells via regulation of the MEK/ERK signaling pathway. The protein is Kinase D-interacting substrate of 220 kDa (KIDINS220) of Homo sapiens (Human).